The following is a 180-amino-acid chain: Inner membrane assembly complex subunit 17 (180 aa).

Residues 1-36 constitute a mitochondrion transit peptide; the sequence is MMIRNQLYRKCIIGGGRSILNGWVINGTVPNIGLRY. Residues 37 to 105 are Mitochondrial matrix-facing; it reads LRSGIVTRSN…RKTQDIPIKR (69 aa). The chain crosses the membrane as a helical span at residues 106–128; it reads FIRPTWMFLLMSSTFYLLGHYIW. A coiled-coil region spans residues 129 to 163; sequence WKLEYDEVEKELDRQVTALEEELHNLIEEHRVHGE. Residues 129–180 are Mitochondrial intermembrane-facing; the sequence is WKLEYDEVEKELDRQVTALEEELHNLIEEHRVHGENEAIKNKKHKHWYKFWS.

Belongs to the INA17 family. As to quaternary structure, component of the inner membrane assembly (INA) complex, composed of INA17 and INA22. Interacts with a subset of F(1)F(0)-ATP synthase subunits of the F(1)-domain and the peripheral stalk.

Its subcellular location is the mitochondrion inner membrane. Component of the INA complex (INAC) that promotes the biogenesis of mitochondrial F(1)F(0)-ATP synthase. INAC facilitates the assembly of the peripheral stalk and promotes the assembly of the catalytic F(1)-domain with the membrane-embedded F(0)-domain. The protein is Inner membrane assembly complex subunit 17 of Vanderwaltozyma polyspora (strain ATCC 22028 / DSM 70294 / BCRC 21397 / CBS 2163 / NBRC 10782 / NRRL Y-8283 / UCD 57-17) (Kluyveromyces polysporus).